The chain runs to 327 residues: BTB/POZ domain-containing protein KCTD12 (327 aa).

The disordered stretch occupies residues 1 to 28 (MALADSARGLPNGGGGGGGSGSSSSSAE). Position 2 is an N-acetylalanine (Ala2). Residues 11 to 21 (PNGGGGGGGSG) show a composition bias toward gly residues. Position 119 is a phosphotyrosine (Tyr119). Residues 129–204 (LGAPQQPGPG…PLLTPSQSLD (76 aa)) are disordered. Ser153, Ser173, and Ser187 each carry phosphoserine. Residue Thr198 is modified to Phosphothreonine. Ser202 carries the post-translational modification Phosphoserine.

In terms of assembly, interacts as a tetramer with GABBR1 and GABBR2. As to expression, expressed in the brain, mainly in the hippocampus and cerebellum.

The protein localises to the presynaptic cell membrane. It localises to the postsynaptic cell membrane. In terms of biological role, auxiliary subunit of GABA-B receptors that determine the pharmacology and kinetics of the receptor response. Increases agonist potency and markedly alter the G-protein signaling of the receptors by accelerating onset and promoting desensitization. This is BTB/POZ domain-containing protein KCTD12 (Kctd12) from Mus musculus (Mouse).